The sequence spans 212 residues: Pyridoxine/pyridoxamine 5'-phosphate oxidase (212 aa).

Substrate is bound by residues 8–11 (RREY) and Lys66. Residues 61 to 66 (RIVLLK), 76 to 77 (FT), Arg82, Lys83, and Gln105 each bind FMN. Residues Tyr123, Arg127, and Ser131 each coordinate substrate. FMN-binding positions include 140-141 (QS) and Trp185. 191-193 (RLH) contributes to the substrate binding site. Residue Arg195 participates in FMN binding.

Belongs to the pyridoxamine 5'-phosphate oxidase family. As to quaternary structure, homodimer. FMN is required as a cofactor.

The enzyme catalyses pyridoxamine 5'-phosphate + O2 + H2O = pyridoxal 5'-phosphate + H2O2 + NH4(+). The catalysed reaction is pyridoxine 5'-phosphate + O2 = pyridoxal 5'-phosphate + H2O2. The protein operates within cofactor metabolism; pyridoxal 5'-phosphate salvage; pyridoxal 5'-phosphate from pyridoxamine 5'-phosphate: step 1/1. Its pathway is cofactor metabolism; pyridoxal 5'-phosphate salvage; pyridoxal 5'-phosphate from pyridoxine 5'-phosphate: step 1/1. In terms of biological role, catalyzes the oxidation of either pyridoxine 5'-phosphate (PNP) or pyridoxamine 5'-phosphate (PMP) into pyridoxal 5'-phosphate (PLP). This Shewanella baltica (strain OS223) protein is Pyridoxine/pyridoxamine 5'-phosphate oxidase.